A 249-amino-acid polypeptide reads, in one-letter code: Putative TrmH family tRNA/rRNA methyltransferase YacO (249 aa).

Positions 198, 218, and 227 each coordinate S-adenosyl-L-methionine.

This sequence belongs to the class IV-like SAM-binding methyltransferase superfamily. RNA methyltransferase TrmH family.

The sequence is that of Putative TrmH family tRNA/rRNA methyltransferase YacO (yacO) from Bacillus subtilis (strain 168).